The sequence spans 584 residues: Poly(A) RNA polymerase protein 2 (584 aa).

Over residues 1 to 11 the composition is skewed to polar residues; sequence MGAKSVTASSS. Disordered regions lie at residues 1–63 and 81–147; these read MGAK…LPKD and EGFD…QELE. Residues 12–35 show a composition bias toward basic residues; it reads KKIKNRHNGKVKKSKKIKKVRKPQ. Residues 53 to 63 show a composition bias toward basic and acidic residues; that stretch reads NEQETNKLPKD. A compositionally biased stretch (acidic residues) spans 130-139; that stretch reads SEDEQAEQEE. Asp236 and Asp238 together coordinate Mg(2+). Residues Gly301, Lys326, Asn431, and Arg435 each contribute to the ATP site. The PAP-associated domain occupies 371–431; sequence NLGVLLIEFF…AIQDPGDESN (61 aa). Residues 525 to 584 are disordered; that stretch reads TSTATATTTDDDYEITNPPAKKAKIEEKPESEPAKRNSGETYITVSSEDDDEDGYNPYTL. Residues 547–562 show a composition bias toward basic and acidic residues; it reads AKIEEKPESEPAKRNS.

This sequence belongs to the DNA polymerase type-B-like family. As to quaternary structure, component of the TRAMP complex (also called TRF4 complex) composed of at least HUL4, MTR4, PAP2/TRF4 and either AIR1 or AIR2. Interacts with NOP53 and POL2. Interacts directly with AIR2. Mg(2+) is required as a cofactor. The cofactor is Mn(2+).

Its subcellular location is the nucleus. The catalysed reaction is RNA(n) + ATP = RNA(n)-3'-adenine ribonucleotide + diphosphate. Catalytic subunit of the TRAMP complex which has a poly(A) RNA polymerase activity and is involved in a post-transcriptional quality control mechanism limiting inappropriate expression of genetic information. Polyadenylation is required for the degradative activity of the exosome on several of its nuclear RNA substrates like cryptic transcripts generated by RNA polymerase II and III, or hypomethylated pre-tRNAi-Met. Polyadenylates RNA processing and degradation intermediates of snRNAs, snoRNAs and mRNAs that accumulate in strains lacking a functional exosome. TRF4 is also required for proper nuclear division in mitosis, DNA damage repair and sister chromatid cohesion. Involved in the regulation of histone mRNA levels. May mediate mitotic chromosome condensation. This chain is Poly(A) RNA polymerase protein 2 (PAP2), found in Saccharomyces cerevisiae (strain ATCC 204508 / S288c) (Baker's yeast).